The following is a 122-amino-acid chain: Large ribosomal subunit protein uL14 (122 aa).

It belongs to the universal ribosomal protein uL14 family. Part of the 50S ribosomal subunit. Forms a cluster with proteins L3 and L19. In the 70S ribosome, L14 and L19 interact and together make contacts with the 16S rRNA in bridges B5 and B8.

Functionally, binds to 23S rRNA. Forms part of two intersubunit bridges in the 70S ribosome. The protein is Large ribosomal subunit protein uL14 of Sinorhizobium fredii (strain NBRC 101917 / NGR234).